Consider the following 1941-residue polypeptide: Diacylglycerol kinase eta (1941 aa).

The PH domain maps to 93 to 186 (SIIKEGYLLK…WLGSLKAATA (94 aa)). 2 consecutive Phorbol-ester/DAG-type zinc fingers follow at residues 206–256 (HHHW…IANC) and 279–330 (PHQW…AIAC). The 137-residue stretch at 361–497 (GNFSPLLVFV…DRWSIMVFEK (137 aa)) folds into the DAGKc domain. 4 disordered regions span residues 1030 to 1068 (TTTL…SPPR), 1132 to 1164 (CNSN…ETPT), 1215 to 1257 (LESA…PSSS), and 1276 to 1295 (RRHS…KDKD). Residues 1133-1155 (NSNNNSNNNSNSNSNNNNHNDGN) show a composition bias toward low complexity. One can recognise an SAM domain in the interval 1878–1941 (WSVNEVVTWL…LQAIKDLSEN (64 aa)).

Belongs to the eukaryotic diacylglycerol kinase family.

It is found in the cytoplasm. It carries out the reaction a 1,2-diacyl-sn-glycerol + ATP = a 1,2-diacyl-sn-glycero-3-phosphate + ADP + H(+). Functionally, phosphorylates diacylglycerol (DAG) to generate phosphatidic acid (PA). The protein is Diacylglycerol kinase eta of Drosophila grimshawi (Hawaiian fruit fly).